Consider the following 406-residue polypeptide: Probable sodium/metabolite cotransporter BASS1, chloroplastic (406 aa).

Residues Met-1–Arg-64 constitute a chloroplast transit peptide. Transmembrane regions (helical) follow at residues Val-98–Leu-118, Ala-123–Met-143, Leu-152–Val-172, Pro-187–Val-209, Val-217–Leu-237, Met-252–Leu-272, Gly-278–Leu-298, Leu-315–Leu-335, and Val-376–Trp-396.

This sequence belongs to the bile acid:sodium symporter (BASS) (TC 2.A.28) family.

Its subcellular location is the membrane. It localises to the plastid. It is found in the chloroplast envelope. In terms of biological role, may function as sodium-coupled metabolite transporter across the chloroplast envelope. In Oryza sativa subsp. japonica (Rice), this protein is Probable sodium/metabolite cotransporter BASS1, chloroplastic (BASS1).